Consider the following 370-residue polypeptide: Putative transposase InsL for insertion sequence element IS186A (370 aa).

The protein belongs to the transposase 11 family.

Functionally, involved in the transposition of the insertion sequence IS186. The sequence is that of Putative transposase InsL for insertion sequence element IS186A (insL1) from Escherichia coli (strain K12).